A 221-amino-acid chain; its full sequence is Stromal cell-derived factor 2-like protein 1 (221 aa).

A signal peptide spans 1–28 (MWSAGSGRAAGPALLGILLALSLSGGRA). MIR domains follow at residues 33–87 (AGLV…IRGG), 95–150 (GSPV…VRCS), and 151–205 (GQHW…AMEG). The Prevents secretion from ER signature appears at 218 to 221 (HDEL).

It is found in the endoplasmic reticulum lumen. The sequence is that of Stromal cell-derived factor 2-like protein 1 (SDF2L1) from Bos taurus (Bovine).